Reading from the N-terminus, the 73-residue chain is Large ribosomal subunit protein bL31c (73 aa).

The protein belongs to the bacterial ribosomal protein bL31 family. Type A subfamily. Part of the 50S ribosomal subunit.

Its subcellular location is the plastid. The protein localises to the chloroplast. Binds the 23S rRNA. In Palmaria palmata (Dulse), this protein is Large ribosomal subunit protein bL31c.